Reading from the N-terminus, the 518-residue chain is uncharacterized protein (518 aa).

Positions 1–21 are cleaved as a signal peptide; sequence MWKWKVILLFLAEMFVSGVNG. N-linked (GlcNAc...) asparagine glycans are attached at residues asparagine 30, asparagine 142, asparagine 295, asparagine 342, asparagine 362, asparagine 410, and asparagine 503. The CUB domain maps to 389–517; that stretch reads CPPFGITNSV…RGFWVSITPQ (129 aa).

It localises to the secreted. This is an uncharacterized protein from Caenorhabditis elegans.